Here is a 775-residue protein sequence, read N- to C-terminus: 1,4-alpha-glucan branching enzyme GlgB (775 aa).

The Nucleophile role is filled by Asp-431. Glu-484 serves as the catalytic Proton donor.

Belongs to the glycosyl hydrolase 13 family. GlgB subfamily. As to quaternary structure, monomer.

It carries out the reaction Transfers a segment of a (1-&gt;4)-alpha-D-glucan chain to a primary hydroxy group in a similar glucan chain.. It functions in the pathway glycan biosynthesis; glycogen biosynthesis. Catalyzes the formation of the alpha-1,6-glucosidic linkages in glycogen by scission of a 1,4-alpha-linked oligosaccharide from growing alpha-1,4-glucan chains and the subsequent attachment of the oligosaccharide to the alpha-1,6 position. This is 1,4-alpha-glucan branching enzyme GlgB from Parasynechococcus marenigrum (strain WH8102).